Here is a 172-residue protein sequence, read N- to C-terminus: S-ribosylhomocysteine lyase (172 aa).

Fe cation-binding residues include histidine 54, histidine 58, and cysteine 128.

It belongs to the LuxS family. Homodimer. The cofactor is Fe cation.

The enzyme catalyses S-(5-deoxy-D-ribos-5-yl)-L-homocysteine = (S)-4,5-dihydroxypentane-2,3-dione + L-homocysteine. In terms of biological role, involved in the synthesis of autoinducer 2 (AI-2) which is secreted by bacteria and is used to communicate both the cell density and the metabolic potential of the environment. The regulation of gene expression in response to changes in cell density is called quorum sensing. Catalyzes the transformation of S-ribosylhomocysteine (RHC) to homocysteine (HC) and 4,5-dihydroxy-2,3-pentadione (DPD). The chain is S-ribosylhomocysteine lyase from Vibrio atlanticus (strain LGP32) (Vibrio splendidus (strain Mel32)).